The sequence spans 248 residues: 3-deoxy-manno-octulosonate cytidylyltransferase (248 aa).

The protein belongs to the KdsB family.

It is found in the cytoplasm. It catalyses the reaction 3-deoxy-alpha-D-manno-oct-2-ulosonate + CTP = CMP-3-deoxy-beta-D-manno-octulosonate + diphosphate. It participates in nucleotide-sugar biosynthesis; CMP-3-deoxy-D-manno-octulosonate biosynthesis; CMP-3-deoxy-D-manno-octulosonate from 3-deoxy-D-manno-octulosonate and CTP: step 1/1. Its pathway is bacterial outer membrane biogenesis; lipopolysaccharide biosynthesis. In terms of biological role, activates KDO (a required 8-carbon sugar) for incorporation into bacterial lipopolysaccharide in Gram-negative bacteria. The chain is 3-deoxy-manno-octulosonate cytidylyltransferase from Erwinia tasmaniensis (strain DSM 17950 / CFBP 7177 / CIP 109463 / NCPPB 4357 / Et1/99).